Consider the following 651-residue polypeptide: Acetyl-coenzyme A synthetase (651 aa).

CoA-binding positions include 189–192 (RGGK), T311, and N335. ATP-binding positions include 387 to 389 (GEP), 411 to 416 (DTWWQT), D500, and R515. A CoA-binding site is contributed by S523. R526 lines the ATP pocket. The Mg(2+) site is built by V537, H539, and V542. R584 lines the CoA pocket. At K609 the chain carries N6-acetyllysine.

The protein belongs to the ATP-dependent AMP-binding enzyme family. The cofactor is Mg(2+). Post-translationally, acetylated. Deacetylation by the SIR2-homolog deacetylase activates the enzyme.

It carries out the reaction acetate + ATP + CoA = acetyl-CoA + AMP + diphosphate. Its function is as follows. Catalyzes the conversion of acetate into acetyl-CoA (AcCoA), an essential intermediate at the junction of anabolic and catabolic pathways. AcsA undergoes a two-step reaction. In the first half reaction, AcsA combines acetate with ATP to form acetyl-adenylate (AcAMP) intermediate. In the second half reaction, it can then transfer the acetyl group from AcAMP to the sulfhydryl group of CoA, forming the product AcCoA. The protein is Acetyl-coenzyme A synthetase of Allorhizobium ampelinum (strain ATCC BAA-846 / DSM 112012 / S4) (Agrobacterium vitis (strain S4)).